The chain runs to 503 residues: Alpha-1B-glycoprotein (503 aa).

The signal sequence occupies residues 1 to 21 (MSAWAALLLLWGLSLSPVTEQ). 5 Ig-like V-type domains span residues 27–115 (PRPS…EVTG), 117–204 (EPLP…TVTI), 208–305 (DPPP…LVLS), 307–405 (GTLP…LRVD), and 406–501 (GPLP…LRVA). An intrachain disulfide couples Cys-49 to Cys-96. Asn-137 and Asn-182 each carry an N-linked (GlcNAc...) asparagine glycan. Disulfide bonds link Cys-142-Cys-185, Cys-235-Cys-282, Cys-333-Cys-382, and Cys-431-Cys-478. Residue Asn-379 is glycosylated (N-linked (GlcNAc...) asparagine).

As to quaternary structure, interacts with CRISP3. Plasma.

It is found in the secreted. This Bos taurus (Bovine) protein is Alpha-1B-glycoprotein.